The sequence spans 163 residues: UPF0262 protein RPD_4278 (163 aa).

This sequence belongs to the UPF0262 family.

This is UPF0262 protein RPD_4278 from Rhodopseudomonas palustris (strain BisB5).